We begin with the raw amino-acid sequence, 254 residues long: Homeobox protein Dlx4b (254 aa).

The homeobox DNA-binding region spans 129 to 188; sequence IRKPRTIYSSVQLQALHQRFQQTQYLALPERADLAAKLGLTQTQVKIWFQNKRSKYKKIM.

The protein belongs to the distal-less homeobox family.

It is found in the nucleus. In terms of biological role, during larvae development, may be important for neurocranium morphogenesis. This is Homeobox protein Dlx4b (dlx4b) from Danio rerio (Zebrafish).